We begin with the raw amino-acid sequence, 455 residues long: Zinc finger protein ZPR1 homolog (455 aa).

2 consecutive C4-type zinc fingers follow at residues 28–60 (CPVC…CPHC) and 247–279 (CPNC…CDRC).

This sequence belongs to the ZPR1 family.

It is found in the nucleus. The sequence is that of Zinc finger protein ZPR1 homolog from Caenorhabditis elegans.